The chain runs to 63 residues: Large ribosomal subunit protein uL29 (63 aa).

It belongs to the universal ribosomal protein uL29 family.

The chain is Large ribosomal subunit protein uL29 from Photobacterium profundum (strain SS9).